A 367-amino-acid polypeptide reads, in one-letter code: 5-amino-6-(D-ribitylamino)uracil--L-tyrosine 4-hydroxyphenyl transferase (367 aa).

The Radical SAM core domain occupies 56–290 (VTYVRNQNIN…MFAVARLFLD (235 aa)). [4Fe-4S] cluster contacts are provided by C70, C74, and C77.

This sequence belongs to the radical SAM superfamily. CofH family. In terms of assembly, consists of two subunits, CofG and CofH. [4Fe-4S] cluster serves as cofactor.

The enzyme catalyses 5-amino-6-(D-ribitylamino)uracil + L-tyrosine + S-adenosyl-L-methionine = 5-amino-5-(4-hydroxybenzyl)-6-(D-ribitylimino)-5,6-dihydrouracil + 2-iminoacetate + 5'-deoxyadenosine + L-methionine + H(+). Its pathway is cofactor biosynthesis; coenzyme F0 biosynthesis. Functionally, catalyzes the radical-mediated synthesis of 5-amino-5-(4-hydroxybenzyl)-6-(D-ribitylimino)-5,6-dihydrouracil from 5-amino-6-(D-ribitylamino)uracil and L-tyrosine. This is 5-amino-6-(D-ribitylamino)uracil--L-tyrosine 4-hydroxyphenyl transferase from Methanoculleus marisnigri (strain ATCC 35101 / DSM 1498 / JR1).